We begin with the raw amino-acid sequence, 385 residues long: ATP phosphoribosyltransferase regulatory subunit (385 aa).

It belongs to the class-II aminoacyl-tRNA synthetase family. HisZ subfamily. In terms of assembly, heteromultimer composed of HisG and HisZ subunits.

The protein resides in the cytoplasm. The protein operates within amino-acid biosynthesis; L-histidine biosynthesis; L-histidine from 5-phospho-alpha-D-ribose 1-diphosphate: step 1/9. In terms of biological role, required for the first step of histidine biosynthesis. May allow the feedback regulation of ATP phosphoribosyltransferase activity by histidine. The polypeptide is ATP phosphoribosyltransferase regulatory subunit (Bordetella parapertussis (strain 12822 / ATCC BAA-587 / NCTC 13253)).